The primary structure comprises 122 residues: MINKTNRNKIRLRKHLRVRKKITGTAERPRMNVFRSLNNIYVQIIDDTTGNTLVSASTLDAALKGKVAKGGNKEAAKEVGKLVASKAIDKGIKKVVFDRGGYIYHGRIKELADAAREAGLDF.

The protein belongs to the universal ribosomal protein uL18 family. Part of the 50S ribosomal subunit; part of the 5S rRNA/L5/L18/L25 subcomplex. Contacts the 5S and 23S rRNAs.

This is one of the proteins that bind and probably mediate the attachment of the 5S RNA into the large ribosomal subunit, where it forms part of the central protuberance. The polypeptide is Large ribosomal subunit protein uL18 (Ruminiclostridium cellulolyticum (strain ATCC 35319 / DSM 5812 / JCM 6584 / H10) (Clostridium cellulolyticum)).